Reading from the N-terminus, the 372-residue chain is Glutamate 5-kinase (372 aa).

K14 serves as a coordination point for ATP. Substrate contacts are provided by S54, D141, and N153. T173–D174 contributes to the ATP binding site. One can recognise a PUA domain in the interval R280–M358.

Belongs to the glutamate 5-kinase family.

It localises to the cytoplasm. It carries out the reaction L-glutamate + ATP = L-glutamyl 5-phosphate + ADP. It functions in the pathway amino-acid biosynthesis; L-proline biosynthesis; L-glutamate 5-semialdehyde from L-glutamate: step 1/2. Catalyzes the transfer of a phosphate group to glutamate to form L-glutamate 5-phosphate. The polypeptide is Glutamate 5-kinase (Burkholderia vietnamiensis (strain G4 / LMG 22486) (Burkholderia cepacia (strain R1808))).